We begin with the raw amino-acid sequence, 964 residues long: MVDIIDKALRMGEGHQLKKLENVAKAVNALEDEISALSDEDLKAQTPKFKQEIENGKSLDEIMPEAFATVREVSKRTLGQRHFDVQLMGGAALHWGNIAEMKTGEGKTLVATLPTYLNALEGKGVHVVTVNDYLASYQSELMGRIYRFLGMNVGCIITEQKPPERRKQYNADITYGTNNEFGFDYLRDNMAWEKADLVQRGHHYAIVDEVDSILIDEARTPLIISGPAEGDVTRWYRQFAKLVLKLTRDEDYDVDEKKKVVGILDPGITKVEDFLGIDNLYEPANTALIGYLNNAIKAKELFLRDKDYVVTQGEVLIVDEHTGRILPGRRYNEGLHQAIEAKEGVEVKAENQTFATITLQNYFRMYDKLAGMTGTAETEAAEFMNTYKLGVLPIKTNKPMIRKDQDDLIYRTKKEKLAAIVKDVAKRHAKGQPVLLGTASVESSEVVSTLLDVAKIPHQVLNAKQHEKEAAVVAVAGRKGAVTVATNMAGRGTDIMLGGNVEFLADAKLKSEGYSPEDTPEEYEKRWPGTLNEIKAQVKDEHEEVKELGGLYVLGTERHESRRIDNQLRGRSGRQGDPGESRFYLSLEDDLMRLFNTQLVAQVMAKGMEEGQPIEAKSVTKGVRTAQKAVESRNYEIRKNVLKYDDVMNKQRTVIYSERQAVLKGEDIHKDILRFISDTVESYIKGANKGSEKPKDWDWEGLFKALNTVIPTKVDEDEVRKIVGGLKGAKAVEAVRDLIVEDARQQYGEMEETIGETGLRDLERRVVLAVLDRKWREHLYEMDYLKDGIGLRGMGQRDPLVEYQREGYQMYNSMIEAIKEETVQLLFHIDIKQVATTDEAVDEVEETAESADTIAVASGPDENGESVVEAAEGEVEEEDEDTDAKQAIAESAAASGAGESTLPVAGPAPISHAEGKVPVSKRPKSEELKTPWADGRTFPGTGKNAPCPCGSGRKYKMCHGQNEK.

ATP-binding positions include glutamine 86, 104–108 (GEGKT), and aspartate 494. The disordered stretch occupies residues 848–964 (AESADTIAVA…YKMCHGQNEK (117 aa)). Acidic residues predominate over residues 871 to 882 (AEGEVEEEDEDT). Over residues 889–900 (AESAAASGAGES) the composition is skewed to low complexity. Residues cysteine 947, cysteine 949, cysteine 958, and histidine 959 each contribute to the Zn(2+) site.

The protein belongs to the SecA family. Monomer and homodimer. Part of the essential Sec protein translocation apparatus which comprises SecA, SecYEG and auxiliary proteins SecDF. Other proteins may also be involved. Zn(2+) is required as a cofactor.

It is found in the cell membrane. It localises to the cytoplasm. The catalysed reaction is ATP + H2O + cellular proteinSide 1 = ADP + phosphate + cellular proteinSide 2.. Functionally, part of the Sec protein translocase complex. Interacts with the SecYEG preprotein conducting channel. Has a central role in coupling the hydrolysis of ATP to the transfer of proteins into and across the cell membrane, serving as an ATP-driven molecular motor driving the stepwise translocation of polypeptide chains across the membrane. This Bifidobacterium longum (strain DJO10A) protein is Protein translocase subunit SecA.